We begin with the raw amino-acid sequence, 380 residues long: Erythronate-4-phosphate dehydrogenase (380 aa).

Positions 45 and 66 each coordinate substrate. Cysteines 65 and 90 form a disulfide. Residues 126-127 (QV), Asp-146, Thr-175, 206-208 (ASR), and Asp-232 contribute to the NAD(+) site. Arg-208 is an active-site residue. The active site involves Glu-237. Residue His-254 is the Proton donor of the active site. Gly-257 is an NAD(+) binding site. Substrate is bound at residue Tyr-258.

It belongs to the D-isomer specific 2-hydroxyacid dehydrogenase family. PdxB subfamily. Homodimer.

The protein resides in the cytoplasm. It catalyses the reaction 4-phospho-D-erythronate + NAD(+) = (R)-3-hydroxy-2-oxo-4-phosphooxybutanoate + NADH + H(+). It functions in the pathway cofactor biosynthesis; pyridoxine 5'-phosphate biosynthesis; pyridoxine 5'-phosphate from D-erythrose 4-phosphate: step 2/5. In terms of biological role, catalyzes the oxidation of erythronate-4-phosphate to 3-hydroxy-2-oxo-4-phosphonooxybutanoate. The chain is Erythronate-4-phosphate dehydrogenase from Pseudomonas aeruginosa (strain ATCC 15692 / DSM 22644 / CIP 104116 / JCM 14847 / LMG 12228 / 1C / PRS 101 / PAO1).